The chain runs to 371 residues: Forkhead box protein E1 (371 aa).

Residues 21-53 (EERGEAAAAGAGVPAEAAGRGAGGRRRKRPLQR) are disordered. Residues 26–39 (AAAAGAGVPAEAAG) are compositionally biased toward low complexity. Over residues 43–52 (GGRRRKRPLQ) the composition is skewed to basic residues. Positions 55 to 149 (KPPYSYIALI…ESGSFLRRRK (95 aa)) form a DNA-binding region, fork-head.

Post-translationally, phosphorylated. As to expression, expressed in Rathke pouch, in thyroid, and in the epithelium of the pharyngeal wall and arches, whereas it is absent in the epithelium of the pharyngeal pouches.

The protein localises to the nucleus. In terms of biological role, transcription factor that binds consensus sites on a variety of gene promoters and activate their transcription. Involved in proper palate formation, most probably through the expression of MSX1 and TGFB3 genes which are direct targets of this transcription factor. Also implicated in thyroid gland morphogenesis. May indirectly play a role in cell growth and migration through the regulation of WNT5A expression. In Mus musculus (Mouse), this protein is Forkhead box protein E1 (Foxe1).